Here is a 283-residue protein sequence, read N- to C-terminus: Tyrosine recombinase THA_404 (283 aa).

Residues 1–86 form the Core-binding (CB) domain; sequence MDKVIEMFSD…SLNSFFNYLE (86 aa). Residues 107–281 form the Tyr recombinase domain; it reads KIPDFLTEDE…ADQEKFDAVK (175 aa). Residues R145, K170, H233, R236, and H259 contribute to the active site. Y268 (O-(3'-phospho-DNA)-tyrosine intermediate) is an active-site residue.

Belongs to the 'phage' integrase family.

Its subcellular location is the cytoplasm. Site-specific tyrosine recombinase, which acts by catalyzing the cutting and rejoining of the recombining DNA molecules. This Thermosipho africanus (strain TCF52B) protein is Tyrosine recombinase THA_404.